The chain runs to 273 residues: Ribosomal RNA small subunit methyltransferase A (273 aa).

S-adenosyl-L-methionine contacts are provided by asparagine 18, leucine 20, glycine 45, glutamate 66, aspartate 91, and asparagine 113.

The protein belongs to the class I-like SAM-binding methyltransferase superfamily. rRNA adenine N(6)-methyltransferase family. RsmA subfamily.

The protein localises to the cytoplasm. The catalysed reaction is adenosine(1518)/adenosine(1519) in 16S rRNA + 4 S-adenosyl-L-methionine = N(6)-dimethyladenosine(1518)/N(6)-dimethyladenosine(1519) in 16S rRNA + 4 S-adenosyl-L-homocysteine + 4 H(+). Its function is as follows. Specifically dimethylates two adjacent adenosines (A1518 and A1519) in the loop of a conserved hairpin near the 3'-end of 16S rRNA in the 30S particle. May play a critical role in biogenesis of 30S subunits. This Escherichia coli O17:K52:H18 (strain UMN026 / ExPEC) protein is Ribosomal RNA small subunit methyltransferase A.